Reading from the N-terminus, the 321-residue chain is Tetraacyldisaccharide 4'-kinase (321 aa).

54-61 (SVGGTGKT) serves as a coordination point for ATP.

Belongs to the LpxK family.

It catalyses the reaction a lipid A disaccharide + ATP = a lipid IVA + ADP + H(+). Its pathway is glycolipid biosynthesis; lipid IV(A) biosynthesis; lipid IV(A) from (3R)-3-hydroxytetradecanoyl-[acyl-carrier-protein] and UDP-N-acetyl-alpha-D-glucosamine: step 6/6. In terms of biological role, transfers the gamma-phosphate of ATP to the 4'-position of a tetraacyldisaccharide 1-phosphate intermediate (termed DS-1-P) to form tetraacyldisaccharide 1,4'-bis-phosphate (lipid IVA). The protein is Tetraacyldisaccharide 4'-kinase of Rickettsia rickettsii.